The following is a 99-amino-acid chain: Protein Tat (99 aa).

The segment at 1–20 (MELVDPNLDPWNHPGSQPTT) is disordered. Residues 1–24 (MELVDPNLDPWNHPGSQPTTPCTR) form an interaction with human CREBBP region. Residues 1 to 48 (MELVDPNLDPWNHPGSQPTTPCTRCYCKWCCFHCYWCFTTKGLGISYG) form a transactivation region. Zn(2+)-binding residues include Cys22, Cys25, and Cys27. Positions 22–37 (CTRCYCKWCCFHCYWC) are cysteine-rich. Lys28 carries the N6-acetyllysine; by host PCAF modification. The Zn(2+) site is built by Cys30, His33, Cys34, and Cys37. The segment at 38-48 (FTTKGLGISYG) is core. The interval 48 to 99 (GRKKRRQRPRTPQSSQIHQDFVPKQPISQARGNPTGPKESKKEVESKAKTDP) is disordered. The Nuclear localization signal, RNA-binding (TAR), and protein transduction signature appears at 49-57 (RKKRRQRPR). The interaction with the host capping enzyme RNGTT stretch occupies residues 49 to 86 (RKKRRQRPRTPQSSQIHQDFVPKQPISQARGNPTGPKE). An N6-acetyllysine; by host EP300 and GCN5L2 mark is found at Lys50 and Lys51. Arg52 and Arg53 each carry asymmetric dimethylarginine; by host PRMT6. Residue Lys71 forms a Glycyl lysine isopeptide (Lys-Gly) (interchain with G-Cter in ubiquitin) linkage. The segment covering 85 to 99 (KESKKEVESKAKTDP) has biased composition (basic and acidic residues).

The protein belongs to the lentiviruses Tat family. Interacts with host CCNT1. Associates with the P-TEFb complex composed at least of Tat, P-TEFb (CDK9 and CCNT1), TAR RNA, RNA Pol II. Recruits the HATs CREBBP, TAF1/TFIID, EP300, PCAF and GCN5L2. Interacts with host KAT5/Tip60; this interaction targets the latter to degradation. Interacts with the host deacetylase SIRT1. Interacts with host capping enzyme RNGTT; this interaction stimulates RNGTT. Binds to host KDR, and to the host integrins ITGAV/ITGB3 and ITGA5/ITGB1. Interacts with host KPNB1/importin beta-1 without previous binding to KPNA1/importin alpha-1. Interacts with EIF2AK2. Interacts with host nucleosome assembly protein NAP1L1; this interaction may be required for the transport of Tat within the nucleus, since the two proteins interact at the nuclear rim. Interacts with host C1QBP/SF2P32; this interaction involves lysine-acetylated Tat. Interacts with the host chemokine receptors CCR2, CCR3 and CXCR4. Interacts with host DPP4/CD26; this interaction may trigger an anti-proliferative effect. Interacts with host LDLR. Interacts with the host extracellular matrix metalloproteinase MMP1. Interacts with host PRMT6; this interaction mediates Tat's methylation. Interacts with, and is ubiquitinated by MDM2/Hdm2. Interacts with host PSMC3 and HTATIP2. Interacts with STAB1; this interaction may overcome SATB1-mediated repression of IL2 and IL2RA (interleukin) in T cells by binding to the same domain than HDAC1. Interacts (when acetylated) with human CDK13, thereby increasing HIV-1 mRNA splicing and promoting the production of the doubly spliced HIV-1 protein Nef. Interacts with host TBP; this interaction modulates the activity of transcriptional pre-initiation complex. Interacts with host RELA. Interacts with host PLSCR1; this interaction negatively regulates Tat transactivation activity by altering its subcellular distribution. In terms of processing, asymmetrical arginine methylation by host PRMT6 seems to diminish the transactivation capacity of Tat and affects the interaction with host CCNT1. Post-translationally, acetylation by EP300, CREBBP, GCN5L2/GCN5 and PCAF regulates the transactivation activity of Tat. EP300-mediated acetylation of Lys-50 promotes dissociation of Tat from the TAR RNA through the competitive binding to PCAF's bromodomain. In addition, the non-acetylated Tat's N-terminus can also interact with PCAF. PCAF-mediated acetylation of Lys-28 enhances Tat's binding to CCNT1. Lys-50 is deacetylated by SIRT1. Polyubiquitination by host MDM2 does not target Tat to degradation, but activates its transactivation function and fosters interaction with CCNT1 and TAR RNA. In terms of processing, phosphorylated by EIF2AK2 on serine and threonine residues adjacent to the basic region important for TAR RNA binding and function. Phosphorylation of Tat by EIF2AK2 is dependent on the prior activation of EIF2AK2 by dsRNA.

It is found in the host nucleus. The protein localises to the host nucleolus. Its subcellular location is the host cytoplasm. The protein resides in the secreted. Its function is as follows. Transcriptional activator that increases RNA Pol II processivity, thereby increasing the level of full-length viral transcripts. Recognizes a hairpin structure at the 5'-LTR of the nascent viral mRNAs referred to as the transactivation responsive RNA element (TAR) and recruits the cyclin T1-CDK9 complex (P-TEFb complex) that will in turn hyperphosphorylate the RNA polymerase II to allow efficient elongation. The CDK9 component of P-TEFb and other Tat-activated kinases hyperphosphorylate the C-terminus of RNA Pol II that becomes stabilized and much more processive. Other factors such as HTATSF1/Tat-SF1, SUPT5H/SPT5, and HTATIP2 are also important for Tat's function. Besides its effect on RNA Pol II processivity, Tat induces chromatin remodeling of proviral genes by recruiting the histone acetyltransferases (HATs) CREBBP, EP300 and PCAF to the chromatin. This also contributes to the increase in proviral transcription rate, especially when the provirus integrates in transcriptionally silent region of the host genome. To ensure maximal activation of the LTR, Tat mediates nuclear translocation of NF-kappa-B by interacting with host RELA. Through its interaction with host TBP, Tat may also modulate transcription initiation. Tat can reactivate a latently infected cell by penetrating in it and transactivating its LTR promoter. In the cytoplasm, Tat is thought to act as a translational activator of HIV-1 mRNAs. In terms of biological role, extracellular circulating Tat can be endocytosed by surrounding uninfected cells via the binding to several surface receptors such as CD26, CXCR4, heparan sulfate proteoglycans (HSPG) or LDLR. Neurons are rarely infected, but they internalize Tat via their LDLR. Through its interaction with nuclear HATs, Tat is potentially able to control the acetylation-dependent cellular gene expression. Modulates the expression of many cellular genes involved in cell survival, proliferation or in coding for cytokines or cytokine receptors. Tat plays a role in T-cell and neurons apoptosis. Tat induced neurotoxicity and apoptosis probably contribute to neuroAIDS. Circulating Tat also acts as a chemokine-like and/or growth factor-like molecule that binds to specific receptors on the surface of the cells, affecting many cellular pathways. In the vascular system, Tat binds to ITGAV/ITGB3 and ITGA5/ITGB1 integrins dimers at the surface of endothelial cells and competes with bFGF for heparin-binding sites, leading to an excess of soluble bFGF. The chain is Protein Tat from Homo sapiens (Human).